The primary structure comprises 355 residues: UDP-3-O-acylglucosamine N-acyltransferase (355 aa).

The Proton acceptor role is filled by H252.

This sequence belongs to the transferase hexapeptide repeat family. LpxD subfamily. As to quaternary structure, homotrimer.

The enzyme catalyses a UDP-3-O-[(3R)-3-hydroxyacyl]-alpha-D-glucosamine + a (3R)-hydroxyacyl-[ACP] = a UDP-2-N,3-O-bis[(3R)-3-hydroxyacyl]-alpha-D-glucosamine + holo-[ACP] + H(+). The protein operates within bacterial outer membrane biogenesis; LPS lipid A biosynthesis. In terms of biological role, catalyzes the N-acylation of UDP-3-O-acylglucosamine using 3-hydroxyacyl-ACP as the acyl donor. Is involved in the biosynthesis of lipid A, a phosphorylated glycolipid that anchors the lipopolysaccharide to the outer membrane of the cell. This is UDP-3-O-acylglucosamine N-acyltransferase from Polynucleobacter asymbioticus (strain DSM 18221 / CIP 109841 / QLW-P1DMWA-1) (Polynucleobacter necessarius subsp. asymbioticus).